Consider the following 319-residue polypeptide: ADP-L-glycero-D-manno-heptose-6-epimerase (319 aa).

NADP(+)-binding positions include 10–11 (FI), 31–32 (DD), K38, K53, and 75–79 (EGACS). Y139 (proton acceptor) is an active-site residue. K143 serves as a coordination point for NADP(+). Residue N168 participates in substrate binding. V169 and K177 together coordinate NADP(+). K177 acts as the Proton acceptor in catalysis. Substrate contacts are provided by residues S179, H186, 200–203 (FEGA), R213, and Y281.

Belongs to the NAD(P)-dependent epimerase/dehydratase family. HldD subfamily. In terms of assembly, homopentamer. NADP(+) is required as a cofactor.

It carries out the reaction ADP-D-glycero-beta-D-manno-heptose = ADP-L-glycero-beta-D-manno-heptose. It functions in the pathway nucleotide-sugar biosynthesis; ADP-L-glycero-beta-D-manno-heptose biosynthesis; ADP-L-glycero-beta-D-manno-heptose from D-glycero-beta-D-manno-heptose 7-phosphate: step 4/4. Functionally, catalyzes the interconversion between ADP-D-glycero-beta-D-manno-heptose and ADP-L-glycero-beta-D-manno-heptose via an epimerization at carbon 6 of the heptose. This chain is ADP-L-glycero-D-manno-heptose-6-epimerase, found in Aromatoleum aromaticum (strain DSM 19018 / LMG 30748 / EbN1) (Azoarcus sp. (strain EbN1)).